The chain runs to 284 residues: Phosphatidylserine decarboxylase proenzyme (284 aa).

Active-site charge relay system; for autoendoproteolytic cleavage activity residues include aspartate 88, histidine 145, and serine 248. The Schiff-base intermediate with substrate; via pyruvic acid; for decarboxylase activity role is filled by serine 248. A Pyruvic acid (Ser); by autocatalysis modification is found at serine 248.

It belongs to the phosphatidylserine decarboxylase family. PSD-B subfamily. Prokaryotic type I sub-subfamily. Heterodimer of a large membrane-associated beta subunit and a small pyruvoyl-containing alpha subunit. Pyruvate serves as cofactor. Is synthesized initially as an inactive proenzyme. Formation of the active enzyme involves a self-maturation process in which the active site pyruvoyl group is generated from an internal serine residue via an autocatalytic post-translational modification. Two non-identical subunits are generated from the proenzyme in this reaction, and the pyruvate is formed at the N-terminus of the alpha chain, which is derived from the carboxyl end of the proenzyme. The autoendoproteolytic cleavage occurs by a canonical serine protease mechanism, in which the side chain hydroxyl group of the serine supplies its oxygen atom to form the C-terminus of the beta chain, while the remainder of the serine residue undergoes an oxidative deamination to produce ammonia and the pyruvoyl prosthetic group on the alpha chain. During this reaction, the Ser that is part of the protease active site of the proenzyme becomes the pyruvoyl prosthetic group, which constitutes an essential element of the active site of the mature decarboxylase.

The protein resides in the cell membrane. The enzyme catalyses a 1,2-diacyl-sn-glycero-3-phospho-L-serine + H(+) = a 1,2-diacyl-sn-glycero-3-phosphoethanolamine + CO2. It functions in the pathway phospholipid metabolism; phosphatidylethanolamine biosynthesis; phosphatidylethanolamine from CDP-diacylglycerol: step 2/2. Catalyzes the formation of phosphatidylethanolamine (PtdEtn) from phosphatidylserine (PtdSer). The polypeptide is Phosphatidylserine decarboxylase proenzyme (Delftia acidovorans (strain DSM 14801 / SPH-1)).